The primary structure comprises 793 residues: von Willebrand factor A domain-containing protein 5A (793 aa).

One can recognise a VIT domain in the interval 1 to 131; that stretch reads MEHHCGLITS…KVAVTLRYVQ (131 aa). The 189-residue stretch at 281 to 469 folds into the VWFA domain; it reads EFVFLMDRSG…FALQCAVDNI (189 aa). Residue tyrosine 622 is modified to Phosphotyrosine.

Functionally, may play a role in tumorigenesis as a tumor suppressor. Altered expression of this protein and disruption of the molecular pathway it is involved in may contribute directly to or modify tumorigenesis. The chain is von Willebrand factor A domain-containing protein 5A (Vwa5a) from Mus musculus (Mouse).